A 557-amino-acid polypeptide reads, in one-letter code: Urocanate hydratase (557 aa).

NAD(+) is bound by residues 52–53, Q130, 176–178, E196, R201, 242–243, 263–267, 273–274, and Y322; these read GG, GMG, NA, QTSAH, and YL. Residue C410 is part of the active site. Position 492 (G492) interacts with NAD(+).

The protein belongs to the urocanase family. It depends on NAD(+) as a cofactor.

The protein resides in the cytoplasm. It catalyses the reaction 4-imidazolone-5-propanoate = trans-urocanate + H2O. It participates in amino-acid degradation; L-histidine degradation into L-glutamate; N-formimidoyl-L-glutamate from L-histidine: step 2/3. Its function is as follows. Catalyzes the conversion of urocanate to 4-imidazolone-5-propionate. This chain is Urocanate hydratase, found in Pseudoalteromonas translucida (strain TAC 125).